An 88-amino-acid polypeptide reads, in one-letter code: Small ribosomal subunit protein uS15 (88 aa).

It belongs to the universal ribosomal protein uS15 family. Part of the 30S ribosomal subunit. Forms a bridge to the 50S subunit in the 70S ribosome, contacting the 23S rRNA.

Functionally, one of the primary rRNA binding proteins, it binds directly to 16S rRNA where it helps nucleate assembly of the platform of the 30S subunit by binding and bridging several RNA helices of the 16S rRNA. In terms of biological role, forms an intersubunit bridge (bridge B4) with the 23S rRNA of the 50S subunit in the ribosome. This chain is Small ribosomal subunit protein uS15, found in Mycoplasmopsis agalactiae (strain NCTC 10123 / CIP 59.7 / PG2) (Mycoplasma agalactiae).